The following is a 171-amino-acid chain: Transcriptional repressor NrdR (171 aa).

Over residues 1 to 10 (MQCPHCHHNG) the composition is skewed to basic residues. Positions 1-21 (MQCPHCHHNGSRVVDSRPTDD) are disordered. Residues 3-34 (CPHCHHNGSRVVDSRPTDDGRVIRRRRECENC) fold into a zinc finger. The region spanning 49–139 (LLVIKKNGAR…VYRQFKDMHV (91 aa)) is the ATP-cone domain. The interval 152–171 (KVKLAKPSAKTTHAPKRKKD) is disordered.

This sequence belongs to the NrdR family. Zn(2+) serves as cofactor.

Its function is as follows. Negatively regulates transcription of bacterial ribonucleotide reductase nrd genes and operons by binding to NrdR-boxes. This chain is Transcriptional repressor NrdR, found in Lactiplantibacillus plantarum (strain ATCC BAA-793 / NCIMB 8826 / WCFS1) (Lactobacillus plantarum).